The primary structure comprises 473 residues: Hexaprenyl pyrophosphate synthase, mitochondrial (473 aa).

Residues K84, R87, and H186 each contribute to the isopentenyl diphosphate site. Residues D193 and D197 each contribute to the Mg(2+) site. An all-trans-polyprenyl diphosphate is bound at residue R202. R203 provides a ligand contact to isopentenyl diphosphate. Positions 323, 324, 361, and 378 each coordinate an all-trans-polyprenyl diphosphate.

It belongs to the FPP/GGPP synthase family. Mg(2+) is required as a cofactor.

Its subcellular location is the mitochondrion inner membrane. The protein operates within cofactor biosynthesis; ubiquinone biosynthesis. In terms of biological role, assembly of polyisoprenoid side chains. The polyprenyl synthase of coenzyme Q biosynthesis catalyzes the formation from isopentenyl diphosphate of all trans-polyprenyl pyrophosphates generally ranging in length of between 6 and 10 isoprene units depending on the species. This Saccharomyces cerevisiae (strain ATCC 204508 / S288c) (Baker's yeast) protein is Hexaprenyl pyrophosphate synthase, mitochondrial (COQ1).